The chain runs to 226 residues: Ribosomal RNA large subunit methyltransferase E (226 aa).

Residues Gly-82, Trp-84, Asp-100, Asp-116, and Asp-140 each contribute to the S-adenosyl-L-methionine site. Lys-180 (proton acceptor) is an active-site residue.

Belongs to the class I-like SAM-binding methyltransferase superfamily. RNA methyltransferase RlmE family.

The protein localises to the cytoplasm. The catalysed reaction is uridine(2552) in 23S rRNA + S-adenosyl-L-methionine = 2'-O-methyluridine(2552) in 23S rRNA + S-adenosyl-L-homocysteine + H(+). Its function is as follows. Specifically methylates the uridine in position 2552 of 23S rRNA at the 2'-O position of the ribose in the fully assembled 50S ribosomal subunit. The protein is Ribosomal RNA large subunit methyltransferase E of Caulobacter sp. (strain K31).